We begin with the raw amino-acid sequence, 200 residues long: Large ribosomal subunit protein uL4 (200 aa).

Residues 42–69 are disordered; the sequence is SKAQKNRSDVSGGGRKPWRQKGTGRARA.

Belongs to the universal ribosomal protein uL4 family. Part of the 50S ribosomal subunit.

Functionally, one of the primary rRNA binding proteins, this protein initially binds near the 5'-end of the 23S rRNA. It is important during the early stages of 50S assembly. It makes multiple contacts with different domains of the 23S rRNA in the assembled 50S subunit and ribosome. In terms of biological role, forms part of the polypeptide exit tunnel. This chain is Large ribosomal subunit protein uL4, found in Alcanivorax borkumensis (strain ATCC 700651 / DSM 11573 / NCIMB 13689 / SK2).